Reading from the N-terminus, the 644-residue chain is Chaperone protein DnaK (644 aa).

Thr199 carries the post-translational modification Phosphothreonine; by autocatalysis. The span at 550 to 584 (ADKLDESEKQRAQDEIKRGREAMESGDLERMKASR) shows a compositional bias: basic and acidic residues. Disordered regions lie at residues 550-586 (ADKL…SRDS) and 599-644 (YSQA…EDKK). Positions 600–623 (SQAGPEQGAPGAEAGAGASQGASG) are enriched in low complexity.

The protein belongs to the heat shock protein 70 family.

Functionally, acts as a chaperone. This is Chaperone protein DnaK from Leptospira biflexa serovar Patoc (strain Patoc 1 / Ames).